The chain runs to 213 residues: Orotate phosphoribosyltransferase (213 aa).

Lysine 26 serves as a coordination point for 5-phospho-alpha-D-ribose 1-diphosphate. 34-35 (FF) is a binding site for orotate. Residues 72 to 73 (YK), arginine 99, lysine 100, lysine 103, histidine 105, and 124 to 132 (DDVITAGTA) each bind 5-phospho-alpha-D-ribose 1-diphosphate. Threonine 128 and arginine 156 together coordinate orotate.

The protein belongs to the purine/pyrimidine phosphoribosyltransferase family. PyrE subfamily. As to quaternary structure, homodimer. Mg(2+) serves as cofactor.

The enzyme catalyses orotidine 5'-phosphate + diphosphate = orotate + 5-phospho-alpha-D-ribose 1-diphosphate. Its pathway is pyrimidine metabolism; UMP biosynthesis via de novo pathway; UMP from orotate: step 1/2. Functionally, catalyzes the transfer of a ribosyl phosphate group from 5-phosphoribose 1-diphosphate to orotate, leading to the formation of orotidine monophosphate (OMP). The protein is Orotate phosphoribosyltransferase of Vibrio atlanticus (strain LGP32) (Vibrio splendidus (strain Mel32)).